The sequence spans 102 residues: Acid shock protein (102 aa).

Residues 1–21 (MKKVLALVVAAAMGLSSAAFA) form the signal peptide. Residues 22 to 41 (AETATTPAPTATTTKAAPAK) show a composition bias toward low complexity. A propeptide spanning residues 22–58 (AETATTPAPTATTTKAAPAKTTHHKKQHKAAPAQKAQ) is cleaved from the precursor. Positions 22 to 102 (AETATTPAPT…PAKPAAQPAA (81 aa)) are disordered. Residues 80–90 (AAKKHARKHSH) are compositionally biased toward basic residues. Positions 91–102 (QQPAKPAAQPAA) are enriched in low complexity.

Belongs to the Asr family. Proteolytic processing gives rise to the active protein.

The protein localises to the periplasm. Required for growth and/or survival at acidic conditions. The chain is Acid shock protein from Escherichia coli O127:H6 (strain E2348/69 / EPEC).